The chain runs to 400 residues: Tryptophan--tRNA ligase (400 aa).

A 'HIGH' region motif is present at residues proline 12–histidine 20. The segment at arginine 173 to arginine 241 is insert. The 'KMSKS' region signature appears at lysine 265–serine 269. Lysine 268 serves as a coordination point for ATP. Residues lysine 280–proline 305 form a disordered region. A compositionally biased stretch (basic and acidic residues) spans alanine 295–aspartate 304.

The protein belongs to the class-I aminoacyl-tRNA synthetase family. As to quaternary structure, homodimer.

Its subcellular location is the cytoplasm. The catalysed reaction is tRNA(Trp) + L-tryptophan + ATP = L-tryptophyl-tRNA(Trp) + AMP + diphosphate + H(+). The chain is Tryptophan--tRNA ligase (trpS) from Ralstonia nicotianae (strain ATCC BAA-1114 / GMI1000) (Ralstonia solanacearum).